The chain runs to 356 residues: Protein MGF 360-3L (356 aa).

The ANK repeat unit spans residues 61–93 (KLNTALVLAVKENNDDLIMLFTEWGANINYGLL).

Belongs to the asfivirus MGF 360 family.

Plays a role in virus cell tropism, and may be required for efficient virus replication in macrophages. The polypeptide is Protein MGF 360-3L (Ornithodoros (relapsing fever ticks)).